The chain runs to 60 residues: Small, acid-soluble spore protein H (60 aa).

Belongs to the SspH family.

Its subcellular location is the spore core. This Bacillus velezensis (strain DSM 23117 / BGSC 10A6 / LMG 26770 / FZB42) (Bacillus amyloliquefaciens subsp. plantarum) protein is Small, acid-soluble spore protein H.